Reading from the N-terminus, the 295-residue chain is Trimeric intracellular cation channel type 1B.1 (295 aa).

Residues 1–27 lie on the Lumenal side of the membrane; the sequence is MVVPESFQLDQEILLDAGAQLHRLKMY. A helical membrane pass occupies residues 28 to 45; the sequence is PYFDVAHYLLMIIEVRDD. The Cytoplasmic portion of the chain corresponds to 46-56; that stretch reads LGSAASIFSRK. Residues 57–80 traverse the membrane as a discontinuously helical segment; it reads HPLSCWLSSMLMCFADAFLANFLL. The Lumenal portion of the chain corresponds to 81-89; it reads GEPVIAPFK. A helical transmembrane segment spans residues 90 to 107; that stretch reads RHDDIILATIIWYLVFYA. Topologically, residues 108 to 119 are cytoplasmic; the sequence is PFDGIYKIAKIT. A helical transmembrane segment spans residues 120–148; that stretch reads PVKCVLAVMKEVKRAYKVSHGVSHAAKLY. A 1,2-diacyl-sn-glycero-3-phospho-(1D-myo-inositol-4,5-bisphosphate) is bound by residues Lys129 and Arg133. The Lumenal portion of the chain corresponds to 149-150; sequence PN. The chain crosses the membrane as a discontinuously helical span at residues 151-177; it reads SYIVQVLVGTAKGAGSGIVRTLEQLVR. Residue Ser166 participates in a 1,2-diacyl-sn-glycero-3-phospho-(1D-myo-inositol-4,5-bisphosphate) binding. At 178 to 188 the chain is on the cytoplasmic side; that stretch reads GVWLPTHNELL. A helical membrane pass occupies residues 189-210; sequence RPSFATKACVVAASVLALEKSG. At 211-215 the chain is on the lumenal side; that stretch reads TYLTA. The helical transmembrane segment at 216-239 threads the bilayer; that stretch reads PHDLVYLVIVGFFVYFKLSAVILH. The Cytoplasmic portion of the chain corresponds to 240–295; the sequence is VTDPFAPIENLFCAIFMGGIWDAVSRALAASRDRRAAGAHSNENGSSISTPEKKDQ. Positions 274-295 are disordered; sequence RAAGAHSNENGSSISTPEKKDQ.

This sequence belongs to the TMEM38 family. As to quaternary structure, homotrimer; trimerization probably requires binding to phosphatidylinositol 4,5-bisphosphate (PIP2).

The protein localises to the endoplasmic reticulum membrane. Functionally, potassium channel that mediates transmembrane potassium transport. Might be required for maintenance of rapid intracellular calcium release. May act as a counter-ion channel that functions in synchronization with calcium release from intracellular stores. Binds phosphatidylinositol 4,5-bisphosphate (PIP2). The sequence is that of Trimeric intracellular cation channel type 1B.1 from Caenorhabditis elegans.